Reading from the N-terminus, the 61-residue chain is MDVEVANMAAKLRVRGLKLPNAIVVSTAILSDSVLITKDRGIRYEGLEILTPEEFVEKYLM.

Residues 1 to 30 (MDVEVANMAAKLRVRGLKLPNAIVVSTAIL) form the signal peptide.

This is an uncharacterized protein from Archaeoglobus fulgidus (strain ATCC 49558 / DSM 4304 / JCM 9628 / NBRC 100126 / VC-16).